A 245-amino-acid polypeptide reads, in one-letter code: 5'-nucleotidase SurE (245 aa).

Positions 8, 9, 39, and 91 each coordinate a divalent metal cation.

It belongs to the SurE nucleotidase family. Requires a divalent metal cation as cofactor.

The protein localises to the cytoplasm. It carries out the reaction a ribonucleoside 5'-phosphate + H2O = a ribonucleoside + phosphate. Functionally, nucleotidase that shows phosphatase activity on nucleoside 5'-monophosphates. In Psychromonas ingrahamii (strain DSM 17664 / CCUG 51855 / 37), this protein is 5'-nucleotidase SurE.